Reading from the N-terminus, the 691-residue chain is Elongation factor G (691 aa).

The tr-type G domain maps to 8-282 (NKTRNIGIMA…AVVEFLPAPV (275 aa)). GTP-binding positions include 17 to 24 (AHIDAGKT), 81 to 85 (DTPGH), and 135 to 138 (NKMD).

This sequence belongs to the TRAFAC class translation factor GTPase superfamily. Classic translation factor GTPase family. EF-G/EF-2 subfamily.

The protein resides in the cytoplasm. Its function is as follows. Catalyzes the GTP-dependent ribosomal translocation step during translation elongation. During this step, the ribosome changes from the pre-translocational (PRE) to the post-translocational (POST) state as the newly formed A-site-bound peptidyl-tRNA and P-site-bound deacylated tRNA move to the P and E sites, respectively. Catalyzes the coordinated movement of the two tRNA molecules, the mRNA and conformational changes in the ribosome. The chain is Elongation factor G from Heliobacterium modesticaldum (strain ATCC 51547 / Ice1).